Here is a 281-residue protein sequence, read N- to C-terminus: uncharacterized protein (281 aa).

Residues 5–27 form a helical membrane-spanning segment; the sequence is AYVTVIYGNNIYLTGALVLGYTL.

It localises to the membrane. This is an uncharacterized protein from Acanthamoeba polyphaga mimivirus (APMV).